A 601-amino-acid chain; its full sequence is DnaJ-like protein MG200 (601 aa).

One can recognise a J domain in the interval 5-77 (KRDYYEVLGI…DKYGFDGVDG (73 aa)). 2 disordered regions span residues 143–163 (VQQN…VPGE) and 205–272 (VDSE…EPIP). The segment covering 151 to 160 (KDPDELRSKV) has biased composition (basic and acidic residues). The span at 263–272 (EPTPIPEPIP) shows a compositional bias: pro residues.

The protein is DnaJ-like protein MG200 of Mycoplasma genitalium (strain ATCC 33530 / DSM 19775 / NCTC 10195 / G37) (Mycoplasmoides genitalium).